The chain runs to 118 residues: Large ribosomal subunit protein bL19 (118 aa).

This sequence belongs to the bacterial ribosomal protein bL19 family.

Its function is as follows. This protein is located at the 30S-50S ribosomal subunit interface and may play a role in the structure and function of the aminoacyl-tRNA binding site. The sequence is that of Large ribosomal subunit protein bL19 from Marinobacter nauticus (strain ATCC 700491 / DSM 11845 / VT8) (Marinobacter aquaeolei).